A 109-amino-acid chain; its full sequence is Large ribosomal subunit protein uL22 (109 aa).

The span at 84-95 (ARGTASRIRKPT) shows a compositional bias: basic residues. Residues 84–109 (ARGTASRIRKPTSHIMVEVSKPSKEA) form a disordered region.

Belongs to the universal ribosomal protein uL22 family. As to quaternary structure, part of the 50S ribosomal subunit.

In terms of biological role, this protein binds specifically to 23S rRNA; its binding is stimulated by other ribosomal proteins, e.g. L4, L17, and L20. It is important during the early stages of 50S assembly. It makes multiple contacts with different domains of the 23S rRNA in the assembled 50S subunit and ribosome. Its function is as follows. The globular domain of the protein is located near the polypeptide exit tunnel on the outside of the subunit, while an extended beta-hairpin is found that lines the wall of the exit tunnel in the center of the 70S ribosome. This chain is Large ribosomal subunit protein uL22, found in Campylobacter hominis (strain ATCC BAA-381 / DSM 21671 / CCUG 45161 / LMG 19568 / NCTC 13146 / CH001A).